Reading from the N-terminus, the 339-residue chain is Glycerol-3-phosphate dehydrogenase [NAD(P)+] (339 aa).

The NADPH site is built by S15, Y16, H36, and K110. Residues K110, G139, and T141 each contribute to the sn-glycerol 3-phosphate site. A143 contacts NADPH. Residues K195, D248, S258, R259, and N260 each contribute to the sn-glycerol 3-phosphate site. Catalysis depends on K195, which acts as the Proton acceptor. Residue R259 participates in NADPH binding. 2 residues coordinate NADPH: V283 and E285.

This sequence belongs to the NAD-dependent glycerol-3-phosphate dehydrogenase family.

It localises to the cytoplasm. The enzyme catalyses sn-glycerol 3-phosphate + NAD(+) = dihydroxyacetone phosphate + NADH + H(+). It carries out the reaction sn-glycerol 3-phosphate + NADP(+) = dihydroxyacetone phosphate + NADPH + H(+). It functions in the pathway membrane lipid metabolism; glycerophospholipid metabolism. Its function is as follows. Catalyzes the reduction of the glycolytic intermediate dihydroxyacetone phosphate (DHAP) to sn-glycerol 3-phosphate (G3P), the key precursor for phospholipid synthesis. This is Glycerol-3-phosphate dehydrogenase [NAD(P)+] from Pectobacterium atrosepticum (strain SCRI 1043 / ATCC BAA-672) (Erwinia carotovora subsp. atroseptica).